Reading from the N-terminus, the 443-residue chain is Chromosome partition protein MukF (443 aa).

Positions 209–237 (LDETSGNLRELQDTLNAAGDKLQAQLLRI) are leucine-zipper.

Belongs to the MukF family. In terms of assembly, interacts, and probably forms a ternary complex, with MukE and MukB via its C-terminal region. The complex formation is stimulated by calcium or magnesium. It is required for an interaction between MukE and MukB.

It is found in the cytoplasm. Its subcellular location is the nucleoid. Functionally, involved in chromosome condensation, segregation and cell cycle progression. May participate in facilitating chromosome segregation by condensation DNA from both sides of a centrally located replisome during cell division. Not required for mini-F plasmid partitioning. Probably acts via its interaction with MukB and MukE. Overexpression results in anucleate cells. It has a calcium binding activity. This Actinobacillus pleuropneumoniae serotype 5b (strain L20) protein is Chromosome partition protein MukF.